The sequence spans 405 residues: CMP-sialic acid transporter 5 (405 aa).

Topologically, residues 1 to 43 are cytoplasmic; the sequence is MQRNGVVECSVCRSRLVVPSPRSVSRAYDKHRSKISSKFRALN. The chain crosses the membrane as a helical span at residues 44-64; the sequence is VLLVVGDCILVGLQPILVFMS. The Lumenal portion of the chain corresponds to 65-74; it reads KVDGKFQFSP. The helical transmembrane segment at 75 to 95 threads the bilayer; the sequence is ISVNFLTEVTKVVFAIVMLII. The Cytoplasmic segment spans residues 96-121; the sequence is QSRKQKVGEKPLLARSTFIQAARNNA. Residues 122-142 form a helical membrane-spanning segment; that stretch reads LLAVPALLYAINNYLKFIMQL. The Lumenal segment spans residues 143 to 147; sequence YFNPS. A helical membrane pass occupies residues 148–168; sequence TVKMLSNLKVLVIAVLLKFIM. At 169–171 the chain is on the cytoplasmic side; it reads KRR. A helical transmembrane segment spans residues 172–192; the sequence is FSVIQWEALALLLIGISINQL. At 193–200 the chain is on the lumenal side; it reads RTVPAGNT. A helical membrane pass occupies residues 201 to 221; it reads AFGLPVTAIAYIYTLIFVTVP. Topologically, residues 222–244 are cytoplasmic; the sequence is SLASVYNEYALKSQYDTSIYLQN. A helical membrane pass occupies residues 245–265; the sequence is LFLYGYGAIFNFLGILGTALF. Topologically, residues 266–281 are lumenal; that stretch reads QGPESFNILRGHSRAT. The chain crosses the membrane as a helical span at residues 282–302; it reads MFLICNNAAQGILSSFFFKYA. At 303-322 the chain is on the cytoplasmic side; it reads DTILKKYSSTVATIFTGLAS. The chain crosses the membrane as a helical span at residues 323–343; sequence AAFLGHTLTINFLLGISVVFI. Over 344 to 405 the chain is Lumenal; that stretch reads SMHQFFSPLA…TDERQPLLPT (62 aa). Residues 368–405 are disordered; that stretch reads DTQNHRSSESSFVNMTAGAAEDASHRIGTDERQPLLPT. A compositionally biased stretch (basic and acidic residues) spans 389 to 405; that stretch reads DASHRIGTDERQPLLPT.

The protein belongs to the nucleotide-sugar transporter family. CMP-Sialate:CMP antiporter (TC 2.A.7.12) subfamily.

It localises to the golgi apparatus membrane. Its function is as follows. Sugar transporter involved in the transport of CMP-sialic acid from the cytoplasm into the Golgi. May transport important nucleotide sugars such as CMP-Kdo (2-keto-3-deoxy-D-manno-octulosonic acid) in physiological conditions. The chain is CMP-sialic acid transporter 5 from Oryza sativa subsp. japonica (Rice).